The chain runs to 178 residues: Cytochrome b6-f complex iron-sulfur subunit (178 aa).

The chain crosses the membrane as a helical span at residues 20 to 42 (LLTFGTATGVALGALYPVANYFM). One can recognise a Rieske domain in the interval 71–161 (NHPAGDRSLV…IDVEDDKVFV (91 aa)). [2Fe-2S] cluster-binding residues include C107, H109, C125, and H128. C112 and C127 are oxidised to a cystine.

It belongs to the Rieske iron-sulfur protein family. The 4 large subunits of the cytochrome b6-f complex are cytochrome b6, subunit IV (17 kDa polypeptide, PetD), cytochrome f and the Rieske protein, while the 4 small subunits are PetG, PetL, PetM and PetN. The complex functions as a dimer. [2Fe-2S] cluster is required as a cofactor.

It localises to the cellular thylakoid membrane. It catalyses the reaction 2 oxidized [plastocyanin] + a plastoquinol + 2 H(+)(in) = 2 reduced [plastocyanin] + a plastoquinone + 4 H(+)(out). Functionally, component of the cytochrome b6-f complex, which mediates electron transfer between photosystem II (PSII) and photosystem I (PSI), cyclic electron flow around PSI, and state transitions. This is Cytochrome b6-f complex iron-sulfur subunit from Prochlorococcus marinus (strain MIT 9211).